The chain runs to 130 residues: ATP synthase epsilon chain (130 aa).

Belongs to the ATPase epsilon chain family. As to quaternary structure, F-type ATPases have 2 components, CF(1) - the catalytic core - and CF(0) - the membrane proton channel. CF(1) has five subunits: alpha(3), beta(3), gamma(1), delta(1), epsilon(1). CF(0) has three main subunits: a, b and c.

It localises to the cell inner membrane. Produces ATP from ADP in the presence of a proton gradient across the membrane. This is ATP synthase epsilon chain (atpC) from Fuscovulum blasticum (Rhodobacter blasticus).